A 138-amino-acid polypeptide reads, in one-letter code: Ribosome-binding factor A (138 aa).

Residues 119 to 138 (RSPEVQRDLGPSNEKDDEQN) form a disordered region.

This sequence belongs to the RbfA family. Monomer. Binds 30S ribosomal subunits, but not 50S ribosomal subunits or 70S ribosomes.

It is found in the cytoplasm. In terms of biological role, one of several proteins that assist in the late maturation steps of the functional core of the 30S ribosomal subunit. Associates with free 30S ribosomal subunits (but not with 30S subunits that are part of 70S ribosomes or polysomes). Required for efficient processing of 16S rRNA. May interact with the 5'-terminal helix region of 16S rRNA. In Agrobacterium fabrum (strain C58 / ATCC 33970) (Agrobacterium tumefaciens (strain C58)), this protein is Ribosome-binding factor A.